Consider the following 231-residue polypeptide: Biosynthetic peptidoglycan transglycosylase (231 aa).

A helical membrane pass occupies residues 10-30 (LLLLGLIGLFLVWQLWLLGWV).

This sequence belongs to the glycosyltransferase 51 family.

It is found in the cell inner membrane. It carries out the reaction [GlcNAc-(1-&gt;4)-Mur2Ac(oyl-L-Ala-gamma-D-Glu-L-Lys-D-Ala-D-Ala)](n)-di-trans,octa-cis-undecaprenyl diphosphate + beta-D-GlcNAc-(1-&gt;4)-Mur2Ac(oyl-L-Ala-gamma-D-Glu-L-Lys-D-Ala-D-Ala)-di-trans,octa-cis-undecaprenyl diphosphate = [GlcNAc-(1-&gt;4)-Mur2Ac(oyl-L-Ala-gamma-D-Glu-L-Lys-D-Ala-D-Ala)](n+1)-di-trans,octa-cis-undecaprenyl diphosphate + di-trans,octa-cis-undecaprenyl diphosphate + H(+). Its pathway is cell wall biogenesis; peptidoglycan biosynthesis. Peptidoglycan polymerase that catalyzes glycan chain elongation from lipid-linked precursors. This Dechloromonas aromatica (strain RCB) protein is Biosynthetic peptidoglycan transglycosylase.